The primary structure comprises 349 residues: Aspartate-semialdehyde dehydrogenase (349 aa).

Residues 12-15 and 39-40 each bind NADP(+); these read TGSV and NS. Position 113 (arginine 113) interacts with phosphate. Cysteine 148 serves as the catalytic Acyl-thioester intermediate. Position 175 (glutamine 175) interacts with substrate. 178–179 is an NADP(+) binding site; that stretch reads SG. Substrate is bound at residue glutamate 201. A phosphate-binding site is contributed by lysine 204. Residue arginine 234 participates in substrate binding. Histidine 241 functions as the Proton acceptor in the catalytic mechanism. Residue 326-327 participates in NADP(+) binding; it reads NT.

The protein belongs to the aspartate-semialdehyde dehydrogenase family. As to quaternary structure, homodimer.

It carries out the reaction L-aspartate 4-semialdehyde + phosphate + NADP(+) = 4-phospho-L-aspartate + NADPH + H(+). The protein operates within amino-acid biosynthesis; L-lysine biosynthesis via DAP pathway; (S)-tetrahydrodipicolinate from L-aspartate: step 2/4. It functions in the pathway amino-acid biosynthesis; L-methionine biosynthesis via de novo pathway; L-homoserine from L-aspartate: step 2/3. Its pathway is amino-acid biosynthesis; L-threonine biosynthesis; L-threonine from L-aspartate: step 2/5. In terms of biological role, catalyzes the NADPH-dependent formation of L-aspartate-semialdehyde (L-ASA) by the reductive dephosphorylation of L-aspartyl-4-phosphate. The polypeptide is Aspartate-semialdehyde dehydrogenase (Leptospira interrogans serogroup Icterohaemorrhagiae serovar copenhageni (strain Fiocruz L1-130)).